The sequence spans 723 residues: Peroxisomal bifunctional enzyme (723 aa).

The tract at residues methionine 1–serine 282 is enoyl-CoA hydratase / isomerase. Lysine 38 bears the N6-succinyllysine mark. Glycine 101 contacts substrate. An N6-acetyllysine; alternate modification is found at lysine 165. Lysine 165 is modified (N6-succinyllysine; alternate). N6-acetyllysine is present on lysine 171. Lysine 219 carries the N6-acetyllysine; alternate modification. Lysine 219 carries the post-translational modification N6-succinyllysine; alternate. Position 250 is an N6-acetyllysine (lysine 250). An N6-succinyllysine mark is found at lysine 280 and lysine 290. A 3-hydroxyacyl-CoA dehydrogenase region spans residues threonine 283–glycine 572. Residues lysine 346, lysine 350, and lysine 464 each carry the N6-acetyllysine modification. Lysine 532 carries the post-translational modification N6-succinyllysine. At threonine 548 the chain carries Phosphothreonine. Residue lysine 577 is modified to N6-succinyllysine. Lysine 584, lysine 591, and lysine 710 each carry N6-acetyllysine; alternate. An N6-succinyllysine; alternate mark is found at lysine 584, lysine 591, and lysine 710. Residue serine 718 is modified to Phosphoserine. A Microbody targeting signal motif is present at residues serine 721–leucine 723. Position 722 is an N6-succinyllysine (lysine 722).

It in the N-terminal section; belongs to the enoyl-CoA hydratase/isomerase family. The protein in the C-terminal section; belongs to the 3-hydroxyacyl-CoA dehydrogenase family. In terms of assembly, monomer. Acetylated, leading to enhanced enzyme activity. Acetylation is enhanced by up to 80% after treatment either with trichostin A (TSA) or with nicotinamide (NAM) with highest increase on Lys-346. Acetylation and enzyme activity increased by about 1.5% on addition of fatty acids. In terms of tissue distribution, liver and kidney. Strongly expressed in the terminal segments of the proximal tubule. Lower amounts seen in the brain.

It localises to the peroxisome. The catalysed reaction is a (3S)-3-hydroxyacyl-CoA = a (2E)-enoyl-CoA + H2O. The enzyme catalyses a 4-saturated-(3S)-3-hydroxyacyl-CoA = a (3E)-enoyl-CoA + H2O. It carries out the reaction a (3Z)-enoyl-CoA = a 4-saturated (2E)-enoyl-CoA. It catalyses the reaction a (3E)-enoyl-CoA = a 4-saturated (2E)-enoyl-CoA. The catalysed reaction is a (3S)-3-hydroxyacyl-CoA + NAD(+) = a 3-oxoacyl-CoA + NADH + H(+). The enzyme catalyses (2S,3S)-3-hydroxy-2-methylbutanoyl-CoA = (2E)-2-methylbut-2-enoyl-CoA + H2O. It carries out the reaction (3S)-hydroxyhexadecanoyl-CoA + NAD(+) = 3-oxohexadecanoyl-CoA + NADH + H(+). It catalyses the reaction (3S)-hydroxyhexadecanoyl-CoA = (2E)-hexadecenoyl-CoA + H2O. The catalysed reaction is (2E)-hexadecenedioyl-CoA + H2O = (3S)-hydroxyhexadecanedioyl-CoA. The enzyme catalyses (3S)-hydroxyhexadecanedioyl-CoA + NAD(+) = 3-oxohexadecanedioyl-CoA + NADH + H(+). It carries out the reaction (3E,5Z)-tetradecadienoyl-CoA = (2E,5Z)-tetradecadienoyl-CoA. It catalyses the reaction (3E,5Z)-octadienoyl-CoA = (2E,5Z)-octadienoyl-CoA. The catalysed reaction is (3S)-hydroxydecanoyl-CoA + NAD(+) = 3-oxodecanoyl-CoA + NADH + H(+). The enzyme catalyses (3E)-decenoyl-CoA = (2E)-decenoyl-CoA. It carries out the reaction (3Z)-hexenoyl-CoA = (2E)-hexenoyl-CoA. It catalyses the reaction (3E)-hexenoyl-CoA = (2E)-hexenoyl-CoA. The catalysed reaction is (3S)-hydroxydecanoyl-CoA = (2E)-decenoyl-CoA + H2O. The enzyme catalyses (3S)-hydroxyhexanoyl-CoA = (2E)-hexenoyl-CoA + H2O. It functions in the pathway lipid metabolism; fatty acid beta-oxidation. Enzyme activity enhanced by acetylation. Its function is as follows. Peroxisomal trifunctional enzyme possessing 2-enoyl-CoA hydratase, 3-hydroxyacyl-CoA dehydrogenase, and delta 3, delta 2-enoyl-CoA isomerase activities. Catalyzes two of the four reactions of the long chain fatty acids peroxisomal beta-oxidation pathway. Can also use branched-chain fatty acids such as 2-methyl-2E-butenoyl-CoA as a substrate, which is hydrated into (2S,3S)-3-hydroxy-2-methylbutanoyl-CoA. Optimal isomerase for 2,5 double bonds into 3,5 form isomerization in a range of enoyl-CoA species. Also able to isomerize both 3-cis and 3-trans double bonds into the 2-trans form in a range of enoyl-CoA species. With HSD17B4, catalyzes the hydration of trans-2-enoyl-CoA and the dehydrogenation of 3-hydroxyacyl-CoA, but with opposite chiral specificity. Regulates the amount of medium-chain dicarboxylic fatty acids which are essential regulators of all fatty acid oxidation pathways. Also involved in the degradation of long-chain dicarboxylic acids through peroxisomal beta-oxidation. This Homo sapiens (Human) protein is Peroxisomal bifunctional enzyme.